The primary structure comprises 107 residues: MNKIIKGDRVVVIAGKDKGKQGQVVRVLGDKVVVEGVNVVKRHQKPNPMRGIEGGIITKEMPLDISNIAILNPETNKADRVGIKLIENEGKVKRVRFFKSNGSIIGA.

Belongs to the universal ribosomal protein uL24 family. In terms of assembly, part of the 50S ribosomal subunit.

Its function is as follows. One of two assembly initiator proteins, it binds directly to the 5'-end of the 23S rRNA, where it nucleates assembly of the 50S subunit. Functionally, one of the proteins that surrounds the polypeptide exit tunnel on the outside of the subunit. The polypeptide is Large ribosomal subunit protein uL24 (Neisseria meningitidis serogroup C (strain 053442)).